The following is a 113-amino-acid chain: Ig heavy chain V-III region U61 (113 aa).

The Ig-like domain maps to 1–113 (EVKLEESGGG…YWGQGTLVPV (113 aa)). The cysteines at positions 22 and 98 are disulfide-linked.

The chain is Ig heavy chain V-III region U61 from Mus musculus (Mouse).